Reading from the N-terminus, the 273-residue chain is Nitrogenase iron protein (273 aa).

8-15 (GKGGIGKS) contacts ATP. C94 contacts [4Fe-4S] cluster. The residue at position 97 (R97) is an ADP-ribosylarginine; by dinitrogenase reductase ADP-ribosyltransferase. C130 is a binding site for [4Fe-4S] cluster.

Belongs to the NifH/BchL/ChlL family. As to quaternary structure, homodimer. [4Fe-4S] cluster is required as a cofactor. Post-translationally, the reversible ADP-ribosylation of Arg-97 inactivates the nitrogenase reductase and regulates nitrogenase activity.

It carries out the reaction N2 + 8 reduced [2Fe-2S]-[ferredoxin] + 16 ATP + 16 H2O = H2 + 8 oxidized [2Fe-2S]-[ferredoxin] + 2 NH4(+) + 16 ADP + 16 phosphate + 6 H(+). The key enzymatic reactions in nitrogen fixation are catalyzed by the nitrogenase complex, which has 2 components: the iron protein and the molybdenum-iron protein. This Desulforapulum autotrophicum (strain ATCC 43914 / DSM 3382 / VKM B-1955 / HRM2) (Desulfobacterium autotrophicum) protein is Nitrogenase iron protein.